The chain runs to 318 residues: Thioredoxin reductase (318 aa).

Residue 36-43 participates in FAD binding; sequence TGLQQGGQ. A disulfide bridge connects residues Cys-136 and Cys-139. FAD is bound at residue 286-295; that stretch reads DVMDHNYRQA.

It belongs to the class-II pyridine nucleotide-disulfide oxidoreductase family. As to quaternary structure, homodimer. FAD serves as cofactor.

It is found in the cytoplasm. It catalyses the reaction [thioredoxin]-dithiol + NADP(+) = [thioredoxin]-disulfide + NADPH + H(+). In Haemophilus influenzae (strain ATCC 51907 / DSM 11121 / KW20 / Rd), this protein is Thioredoxin reductase (trxB).